The chain runs to 352 residues: tRNA-specific 2-thiouridylase MnmA (352 aa).

ATP-binding positions include 7–14 (GLSGGVDS) and L33. C94 acts as the Nucleophile in catalysis. C94 and C193 are oxidised to a cystine. G119 provides a ligand contact to ATP. An interaction with tRNA region spans residues 143–145 (KDQ). The active-site Cysteine persulfide intermediate is C193. Residues 298-299 (RY) form an interaction with tRNA region.

It belongs to the MnmA/TRMU family.

The protein localises to the cytoplasm. It carries out the reaction S-sulfanyl-L-cysteinyl-[protein] + uridine(34) in tRNA + AH2 + ATP = 2-thiouridine(34) in tRNA + L-cysteinyl-[protein] + A + AMP + diphosphate + H(+). Catalyzes the 2-thiolation of uridine at the wobble position (U34) of tRNA, leading to the formation of s(2)U34. This is tRNA-specific 2-thiouridylase MnmA from Microcystis aeruginosa (strain NIES-843 / IAM M-2473).